A 175-amino-acid chain; its full sequence is Interferon gamma (175 aa).

Positions 1–23 are cleaved as a signal peptide; the sequence is MNATCCILALLLCLTQAISGCYC. At Gln24 the chain carries Pyrrolidone carboxylic acid. 2 N-linked (GlcNAc...) asparagine glycosylation sites follow: Asn39 and Asn106.

Belongs to the type II (or gamma) interferon family. In terms of assembly, homodimer. Interacts with IFNGR1 (via extracellular domain); this interaction promotes IFNGR1 dimerization. Released primarily from activated T lymphocytes.

Its subcellular location is the secreted. Its function is as follows. Type II interferon produced by immune cells such as T-cells and NK cells that plays crucial roles in antimicrobial, antiviral, and antitumor responses by activating effector immune cells and enhancing antigen presentation. Primarily signals through the JAK-STAT pathway after interaction with its receptor IFNGR1 to affect gene regulation. Upon IFNG binding, IFNGR1 intracellular domain opens out to allow association of downstream signaling components JAK2, JAK1 and STAT1, leading to STAT1 activation, nuclear translocation and transcription of IFNG-regulated genes. Many of the induced genes are transcription factors such as IRF1 that are able to further drive regulation of a next wave of transcription. Plays a role in class I antigen presentation pathway by inducing a replacement of catalytic proteasome subunits with immunoproteasome subunits. In turn, increases the quantity, quality, and repertoire of peptides for class I MHC loading. Increases the efficiency of peptide generation also by inducing the expression of activator PA28 that associates with the proteasome and alters its proteolytic cleavage preference. Up-regulates as well MHC II complexes on the cell surface by promoting expression of several key molecules such as cathepsins B/CTSB, H/CTSH, and L/CTSL. Participates in the regulation of hematopoietic stem cells during development and under homeostatic conditions by affecting their development, quiescence, and differentiation. This is Interferon gamma (IFNG) from Peromyscus maniculatus (North American deer mouse).